The following is a 462-amino-acid chain: A-type ATP synthase subunit B (462 aa).

It belongs to the ATPase alpha/beta chains family. In terms of assembly, has multiple subunits with at least A(3), B(3), C, D, E, F, H, I and proteolipid K(x).

It is found in the cell membrane. Its function is as follows. Component of the A-type ATP synthase that produces ATP from ADP in the presence of a proton gradient across the membrane. The B chain is a regulatory subunit. The chain is A-type ATP synthase subunit B from Pyrococcus furiosus (strain ATCC 43587 / DSM 3638 / JCM 8422 / Vc1).